We begin with the raw amino-acid sequence, 699 residues long: DNA topoisomerase 1 (699 aa).

Composition is skewed to basic and acidic residues over residues 1-15 (MAKSKVVEKDKKNEL) and 22-35 (IELKGQSKNEESKG). Positions 1 to 37 (MAKSKVVEKDKKNELDNQSADIELKGQSKNEESKGGK) are disordered. In terms of domain architecture, Toprim spans 38–146 (KKVIIVESPA…NIITFTEITE (109 aa)). Mg(2+) contacts are provided by E44 and D115. The 424-residue stretch at 160–583 (DMNKVNAQLA…SFLKEFNKDL (424 aa)) folds into the Topo IA-type catalytic domain. The tract at residues 194–199 (SAGRVQ) is interaction with DNA. The active-site O-(5'-phospho-DNA)-tyrosine intermediate is Y324. The C4-type zinc-finger motif lies at 601–624 (CEDCSGNYKLKVGKYGLYLHCPNC). The interval 649-699 (QESQEENGEKNSVQSEESSANSGNRKFYRKRRTSGSKKSSTKSASSKAKKK) is disordered. Polar residues predominate over residues 661 to 672 (VQSEESSANSGN). Over residues 674-683 (KFYRKRRTSG) the composition is skewed to basic residues. Low complexity predominate over residues 684–699 (SKKSSTKSASSKAKKK).

Belongs to the type IA topoisomerase family. In terms of assembly, monomer. It depends on Mg(2+) as a cofactor.

The enzyme catalyses ATP-independent breakage of single-stranded DNA, followed by passage and rejoining.. Functionally, releases the supercoiling and torsional tension of DNA, which is introduced during the DNA replication and transcription, by transiently cleaving and rejoining one strand of the DNA duplex. Introduces a single-strand break via transesterification at a target site in duplex DNA. The scissile phosphodiester is attacked by the catalytic tyrosine of the enzyme, resulting in the formation of a DNA-(5'-phosphotyrosyl)-enzyme intermediate and the expulsion of a 3'-OH DNA strand. The free DNA strand then undergoes passage around the unbroken strand, thus removing DNA supercoils. Finally, in the religation step, the DNA 3'-OH attacks the covalent intermediate to expel the active-site tyrosine and restore the DNA phosphodiester backbone. In Fervidobacterium islandicum, this protein is DNA topoisomerase 1.